The following is a 57-amino-acid chain: Large ribosomal subunit protein bL32c (57 aa).

It belongs to the bacterial ribosomal protein bL32 family.

The protein resides in the plastid. It is found in the chloroplast. The polypeptide is Large ribosomal subunit protein bL32c (Phalaenopsis aphrodite subsp. formosana (Moth orchid)).